A 373-amino-acid chain; its full sequence is Probable leucine aminopeptidase 1 (373 aa).

The first 18 residues, 1-18 (MKLLSVLALSATATSVLG), serve as a signal peptide directing secretion. 2 residues coordinate Zn(2+): H176 and D195. N-linked (GlcNAc...) asparagine glycosylation occurs at N196. Positions 234 and 261 each coordinate Zn(2+). N288 is a glycosylation site (N-linked (GlcNAc...) asparagine). A disulfide bridge connects residues C310 and C314. Position 343 (H343) interacts with Zn(2+).

This sequence belongs to the peptidase M28 family. M28E subfamily. In terms of assembly, monomer. Requires Zn(2+) as cofactor.

The protein resides in the secreted. Functionally, extracellular aminopeptidase which contributes to pathogenicity. This is Probable leucine aminopeptidase 1 (LAP1) from Trichophyton verrucosum (strain HKI 0517).